The primary structure comprises 428 residues: Protein ECERIFERUM 26 (428 aa).

The tract at residues 1-36 (MGRSQEQGQGQGPVHSIRLSTVGATRPTETGTTHEP) is disordered. Residues 21-36 (TVGATRPTETGTTHEP) show a composition bias toward low complexity.

This sequence belongs to the plant acyltransferase family. In terms of tissue distribution, highly expressed in leaves.

The protein resides in the cytoplasm. It is found in the cytosol. Involved in biosynthesis of the epicuticular wax. Plays a role in very-long-chain fatty acid (VLCFA) biosynthesis and is required for C30 fatty acid elongation in leaf. Despite its classification as a BAHD acyltransferase based on sequence homology, CER26 does not seem to share the catalytic mechanism of the members of the BAHD family. This is Protein ECERIFERUM 26 (CER26) from Arabidopsis thaliana (Mouse-ear cress).